The sequence spans 739 residues: Potassium transporter 26 (739 aa).

Over 1–81 the chain is Cytoplasmic; the sequence is MEYHHRPHSP…RQVALLSFQS (81 aa). Residues 82–102 traverse the membrane as a helical segment; the sequence is LGVVYGDLGTSPLYVFSSISL. The Extracellular portion of the chain corresponds to 103–112; sequence DDPGEADFVG. A helical transmembrane segment spans residues 113 to 133; that stretch reads ILSIILWTFTMICLVKYVFIV. At 134–198 the chain is on the cytoplasmic side; the sequence is LKADDHGEGG…KFLEQSTKWQ (65 aa). A helical membrane pass occupies residues 199–219; sequence AVITYIVLAGTCMVLGDGALT. The Extracellular portion of the chain corresponds to 220 to 236; the sequence is PAISVLSAVQGIQSRSS. A helical membrane pass occupies residues 237–257; that stretch reads SITQAHVVLLSVIILFILFFF. Over 258 to 268 the chain is Cytoplasmic; sequence QKHGTSKVSFT. The chain crosses the membrane as a helical span at residues 269-289; that stretch reads FSPIMILWFTFVAFIGLYNII. The Extracellular portion of the chain corresponds to 290–318; it reads KHYPPILKAVSPHYIIIYFIRNKRAAWET. A helical membrane pass occupies residues 319-339; it reads LGAIVLCITGAEAMFADLGHF. Residues 340–347 lie on the Cytoplasmic side of the membrane; it reads NKSSIQMA. A helical membrane pass occupies residues 348-368; it reads FSVIVYPSMILAYAGQAAFLV. Residues 369–385 lie on the Extracellular side of the membrane; that stretch reads KNPSKLSTTFYSSTPEP. Residues 386–406 form a helical membrane-spanning segment; it reads LFWPMFIIATLAAIVASQALI. Topologically, residues 407–437 are cytoplasmic; that stretch reads SASFSIIRQSIALGCFPRVTMKHTSGKHEGQ. A helical membrane pass occupies residues 438–458; the sequence is VYSPEINYFLMVACILITVGF. The Extracellular portion of the chain corresponds to 459-469; it reads KGGPEIGQAFG. A helical transmembrane segment spans residues 470 to 490; the sequence is VAVIFVMLFTTNLMTVVMLII. At 491–494 the chain is on the cytoplasmic side; it reads WESN. Residues 495–515 traverse the membrane as a helical segment; sequence IALASLFFVFFFSIEGIYMTS. Residues 516-519 lie on the Extracellular side of the membrane; that stretch reads LMNK. A helical membrane pass occupies residues 520–540; the sequence is ILQGGWVPFAITAFFLIITLS. Over 541–739 the chain is Cytoplasmic; that stretch reads WTYGRSKKGE…TLQVGMLYEI (199 aa).

This sequence belongs to the HAK/KUP transporter (TC 2.A.72.3) family.

The protein localises to the membrane. Functionally, high-affinity potassium transporter. This is Potassium transporter 26 (HAK26) from Oryza sativa subsp. japonica (Rice).